A 118-amino-acid polypeptide reads, in one-letter code: Basic phospholipase A2 nigroxin A (118 aa).

7 disulfides stabilise this stretch: C11–C70, C25–C117, C27–C43, C42–C98, C49–C91, C59–C84, and C77–C89. Ca(2+) contacts are provided by Y26, G28, and G30. H46 is an active-site residue. Residue D47 participates in Ca(2+) binding. D92 is a catalytic residue.

It belongs to the phospholipase A2 family. Group I subfamily. D49 sub-subfamily. It depends on Ca(2+) as a cofactor. In terms of tissue distribution, expressed by the venom gland.

The protein localises to the secreted. It catalyses the reaction a 1,2-diacyl-sn-glycero-3-phosphocholine + H2O = a 1-acyl-sn-glycero-3-phosphocholine + a fatty acid + H(+). Functionally, snake venom phospholipase A2 (PLA2) that has only a weak enzymatic activity. It has a myotoxic activity in vivo (dystrophic effect). PLA2 catalyzes the calcium-dependent hydrolysis of the 2-acyl groups in 3-sn-phosphoglycerides. This is Basic phospholipase A2 nigroxin A from Micrurus nigrocinctus (Central American coral snake).